Consider the following 267-residue polypeptide: uncharacterized protein (267 aa).

Residues 17–248 (LKVENLTKIF…PRDRTSIEFL (232 aa)) form the ABC transporter domain. 53–60 (GPSGCGKT) provides a ligand contact to ATP.

It belongs to the ABC transporter superfamily.

This is an uncharacterized protein from Methanocaldococcus jannaschii (strain ATCC 43067 / DSM 2661 / JAL-1 / JCM 10045 / NBRC 100440) (Methanococcus jannaschii).